The chain runs to 351 residues: Calcium uniporter protein, mitochondrial (351 aa).

A mitochondrion-targeting transit peptide spans 1 to 50 (MAAAAGRSLLLLLSSRGGGGGGAGGCGALTAGCFPGLGVSRHRQQQHHRT). The Mitochondrial matrix segment spans residues 51–233 (VHQRIASWQN…ISRKAEKRTT (183 aa)). Residues serine 57 and serine 92 each carry the phosphoserine; by CaMK2 modification. The tract at residues 75-165 (VTVVYQNGLP…LTYHVRPPKR (91 aa)) is N-terminal MCU domain. Cysteine 97 carries the post-translational modification S-glutathionyl cysteine. Positions 192-223 (IEQHQLNKERELIERLEDLKEQLAPLEKVRIE) form a coiled coil. A helical transmembrane segment spans residues 234-255 (LVLWGGLAYMATQFGILARLTW). The Mitochondrial intermembrane segment spans residues 256–262 (WEYSWDI). The short motif at 260-268 (WDIMEPVTY) is the Selectivity filter element. Residues 263–284 (MEPVTYFITYGSAMAMYAYFVM) traverse the membrane as a helical segment. Position 264 (glutamate 264) interacts with Ca(2+). The segment at 285 to 290 (TRQEYV) is juxtamembrane helix. Over 285–351 (TRQEYVYPEA…LPLRQIGEKD (67 aa)) the chain is Mitochondrial matrix. Positions 311 to 339 (RFDLEKYNQLKDAIAQAEMDLKRLRDPLQ) form a coiled coil. Lysine 332 carries the N6-acetyllysine modification.

Belongs to the MCU (TC 1.A.77) family. Homotetramer. Component of the uniplex complex, composed of MCU, EMRE/SMDT1, MICU1 and MICU2 (or MICU3) in a 4:4:1:1 stoichiometry. Interacts with CCDC109B/MCUB; this inhibits channel activity. Interacts with MCUR1. Interactions with MICU1 and MCUR1 are mutually exclusive. Interacts with SLC25A23. Post-translationally, phosphorylation by CaMK2 in heart leads to increased MCU current. The regulation of MCU by CaMK2 is however subject to discussion: another group was unable to reproduce these results. Phosphorylated on tyrosines by PTK2B/PYK2, promoting oligomerization. In terms of processing, glutathionylation at Cys-97 in response to reactive oxygen species (ROS) promotes MCU higher-order assembly, leading to constitutive activation of the MCU channel and mitochondrial calcium overload. Undergoes proteolytic degradation by SPG7.

The protein localises to the mitochondrion inner membrane. It catalyses the reaction Ca(2+)(in) = Ca(2+)(out). With respect to regulation, MCU channel activity is regulated by the heterodimer composed of MICU1 and either MICU2 or MICU3, which act as calcium-sensors. At low calcium levels, MICU1 occludes the pore of the MCU channel, preventing mitochondrial calcium uptake. At higher calcium levels, calcium-binding to MICU1 and MICU2 (or MICU3) induces a conformational change that weakens MCU-MICU1 interactions and moves the MICU1-MICU2 heterodimer away from the pore, allowing calcium permeation through the channel. MCU channel activity is gated by EMRE/SMDT1 via the juxtamembrane helix loop. Inhibited by ruthenium red or its derivative Ru360. Channel-forming and calcium-conducting subunit of the mitochondrial inner membrane calcium uniporter complex (uniplex), which mediates calcium uptake into the mitochondrial matrix. MCU channel activity is regulated by the calcium-sensor subunits of the uniplex MICU1 and MICU2 (or MICU3). Mitochondrial calcium homeostasis plays key roles in cellular physiology and regulates ATP production, cytoplasmic calcium signals and activation of cell death pathways. Involved in buffering the amplitude of systolic calcium rises in cardiomyocytes. While dispensable for baseline homeostatic cardiac function, acts as a key regulator of short-term mitochondrial calcium loading underlying a 'fight-or-flight' response during acute stress: acts by mediating a rapid increase of mitochondrial calcium in pacemaker cells. Participates in mitochondrial permeability transition during ischemia-reperfusion injury. Mitochondrial calcium uptake in skeletal muscle cells is involved in muscle size in adults. Regulates synaptic vesicle endocytosis kinetics in central nerve terminal. Regulates glucose-dependent insulin secretion in pancreatic beta-cells by regulating mitochondrial calcium uptake. Involved in antigen processing and presentation. The chain is Calcium uniporter protein, mitochondrial from Homo sapiens (Human).